The following is a 157-amino-acid chain: MKVELCSFSGYKIYPGHGRRYARIDGKVFQFLNAKCESAFLAKRNPRQINWTVLYRRKHKKGQSEEVTKKRTRRAVKFQRAITGASLAEIMAKRNQKPEVRKAQREQAIRAAKESKKAKQATKKPAAASAKTSAKTAQKPKIAKPMKISAPRVGGKR.

Positions 94–157 are disordered; sequence RNQKPEVRKA…ISAPRVGGKR (64 aa). The span at 96 to 117 shows a compositional bias: basic and acidic residues; that stretch reads QKPEVRKAQREQAIRAAKESKK. Residues 123 to 140 show a composition bias toward low complexity; the sequence is KKPAAASAKTSAKTAQKP.

Belongs to the eukaryotic ribosomal protein eL24 family. As to quaternary structure, component of the large ribosomal subunit.

The protein localises to the cytoplasm. Functionally, component of the large ribosomal subunit. The ribosome is a large ribonucleoprotein complex responsible for the synthesis of proteins in the cell. The chain is Large ribosomal subunit protein eL24 (rpl24) from Gillichthys mirabilis (Long-jawed mudsucker).